Reading from the N-terminus, the 1635-residue chain is Cortactin-binding protein 2 (1635 aa).

Disordered regions lie at residues 1–20 (MATAGGSGQPLCSGPPARTS), 193–219 (ASKLDAEKRKTGELEGALSAERQKSSQ), 264–469 (EQLR…DNLV), and 483–582 (SRFT…PHGI). The stretch at 116–273 (RKMQERMSAQ…EQLRKGNDHK (158 aa)) forms a coiled coil. Composition is skewed to basic and acidic residues over residues 193–205 (ASKLDAEKRKTGE) and 264–274 (EQLRKGNDHKP). Low complexity-rich tracts occupy residues 320–331 (PPVAVPAKPSSA) and 375–395 (GPSSGSTPEPTGSALMPLLNN). Polar residues predominate over residues 402–414 (SQNHSLTSSTPNL). Residues 439–453 (QGNANDQDQNGNTTQ) show a composition bias toward low complexity. Positions 454–466 (SPPSREVSPTSRD) are enriched in polar residues. Residue arginine 484 is modified to Asymmetric dimethylarginine. 6 ANK repeats span residues 697 to 727 (GRPTRLHQAAAQGNVTLLSVLLNEEGLDINH), 731 to 760 (DGSSALYSAAKNGHTDCVRLLLNANAQVDD), 764 to 793 (NGFTPLCSAAAQGHVKCAELLIAYHADINH), 797 to 826 (GGQTPLYLACKNGNNECIKLLLEAGTDRSI), 830 to 859 (DGWTPVHAAVDSGNVDSLTLLMYYGGPESE), and 893 to 923 (EGWTAAHIAASKGLKNCLEILCGHGRLEAER). A disordered region spans residues 856 to 876 (PESENSGSKDQTGLGSREESR). Residues 858-869 (SENSGSKDQTGL) show a composition bias toward polar residues. The interval 1420–1469 (SHRKKGESGSWRKVNTSPRKKSGLSSSQTWTKQEATKDGVRNDTGHQNGN) is disordered. The span at 1432–1452 (KVNTSPRKKSGLSSSQTWTKQ) shows a compositional bias: polar residues. Basic and acidic residues predominate over residues 1453 to 1463 (EATKDGVRNDT). Residue serine 1498 is modified to Phosphoserine. The disordered stretch occupies residues 1531–1624 (RMFGSSRTDP…RQREINNNLK (94 aa)). Polar residues-rich tracts occupy residues 1546–1555 (PTMSDRSLPS) and 1563–1577 (LSSNPTLECSNNTPK). Positions 1615–1624 (RQREINNNLK) are enriched in basic and acidic residues.

As to quaternary structure, interacts with CTTN/cortactin SH3 domain. Interacts with STRN, STRN4/zinedin and MOB4/phocein; this interactions mediate the association with the STRIPAK core complex and may regulate dendritic spine distribution of the STRIPAK complex in hippocampal neurons. Activation of glutamate receptors weakens the interaction with STRN and STRN4.

It is found in the cytoplasm. Its subcellular location is the cell cortex. The protein resides in the cell projection. The protein localises to the dendritic spine. In terms of biological role, regulates the dendritic spine distribution of CTTN/cortactin in hippocampal neurons, and thus controls dendritic spinogenesis and dendritic spine maintenance. Associates with the striatin-interacting phosphatase and kinase (STRIPAK) core complex to regulate dendritic spine distribution of the STRIPAK complex in hippocampal neurons. In Ornithorhynchus anatinus (Duckbill platypus), this protein is Cortactin-binding protein 2 (CTTNBP2).